A 178-amino-acid polypeptide reads, in one-letter code: Cytidylate kinase (178 aa).

Residue glycine 7–threonine 15 participates in ATP binding.

This sequence belongs to the cytidylate kinase family. Type 2 subfamily.

Its subcellular location is the cytoplasm. It catalyses the reaction CMP + ATP = CDP + ADP. It carries out the reaction dCMP + ATP = dCDP + ADP. This is Cytidylate kinase (cmk) from Methanocaldococcus jannaschii (strain ATCC 43067 / DSM 2661 / JAL-1 / JCM 10045 / NBRC 100440) (Methanococcus jannaschii).